Here is a 430-residue protein sequence, read N- to C-terminus: Serine--tRNA ligase (430 aa).

Threonine 237–glutamate 239 provides a ligand contact to L-serine. Arginine 268–glutamate 270 is an ATP binding site. L-serine is bound at residue glutamate 291. Glutamate 355 to serine 358 contributes to the ATP binding site. Serine 391 contributes to the L-serine binding site.

The protein belongs to the class-II aminoacyl-tRNA synthetase family. Type-1 seryl-tRNA synthetase subfamily. In terms of assembly, homodimer. The tRNA molecule binds across the dimer.

The protein localises to the cytoplasm. The enzyme catalyses tRNA(Ser) + L-serine + ATP = L-seryl-tRNA(Ser) + AMP + diphosphate + H(+). The catalysed reaction is tRNA(Sec) + L-serine + ATP = L-seryl-tRNA(Sec) + AMP + diphosphate + H(+). The protein operates within aminoacyl-tRNA biosynthesis; selenocysteinyl-tRNA(Sec) biosynthesis; L-seryl-tRNA(Sec) from L-serine and tRNA(Sec): step 1/1. Catalyzes the attachment of serine to tRNA(Ser). Is also able to aminoacylate tRNA(Sec) with serine, to form the misacylated tRNA L-seryl-tRNA(Sec), which will be further converted into selenocysteinyl-tRNA(Sec). This Shigella dysenteriae serotype 1 (strain Sd197) protein is Serine--tRNA ligase.